Consider the following 461-residue polypeptide: Tubulin gamma-1 chain (461 aa).

142 to 148 is a GTP binding site; that stretch reads AGGTGSG.

It belongs to the tubulin family.

It localises to the cytoplasm. It is found in the cytoskeleton. Its subcellular location is the microtubule organizing center. The protein localises to the centrosome. Tubulin is the major constituent of microtubules. The gamma chain is found at microtubule organizing centers (MTOC) such as the spindle poles or the centrosome, suggesting that it is involved in the minus-end nucleation of microtubule assembly. This Euplotoides octocarinatus (Freshwater ciliate) protein is Tubulin gamma-1 chain.